A 429-amino-acid chain; its full sequence is Adenylosuccinate synthetase (429 aa).

GTP-binding positions include 11 to 17 (GDEGKGK) and 39 to 41 (GHT). Asp12 (proton acceptor) is an active-site residue. 2 residues coordinate Mg(2+): Asp12 and Gly39. IMP is bound by residues 12-15 (DEGK), 37-40 (NAGH), Thr130, Arg144, Asn226, Thr241, and Arg305. Residue His40 is the Proton donor of the active site. 301-307 (VTTGRRR) is a binding site for substrate. GTP contacts are provided by residues Arg307, 333-335 (KLD), and 415-417 (GVG).

Belongs to the adenylosuccinate synthetase family. As to quaternary structure, homodimer. Mg(2+) is required as a cofactor.

It localises to the cytoplasm. The enzyme catalyses IMP + L-aspartate + GTP = N(6)-(1,2-dicarboxyethyl)-AMP + GDP + phosphate + 2 H(+). The protein operates within purine metabolism; AMP biosynthesis via de novo pathway; AMP from IMP: step 1/2. Functionally, plays an important role in the de novo pathway and in the salvage pathway of purine nucleotide biosynthesis. Catalyzes the first committed step in the biosynthesis of AMP from IMP. This chain is Adenylosuccinate synthetase, found in Yarrowia lipolytica (strain CLIB 122 / E 150) (Yeast).